Here is a 198-residue protein sequence, read N- to C-terminus: Probable nicotinate-nucleotide adenylyltransferase (198 aa).

This sequence belongs to the NadD family.

It carries out the reaction nicotinate beta-D-ribonucleotide + ATP + H(+) = deamido-NAD(+) + diphosphate. It functions in the pathway cofactor biosynthesis; NAD(+) biosynthesis; deamido-NAD(+) from nicotinate D-ribonucleotide: step 1/1. Functionally, catalyzes the reversible adenylation of nicotinate mononucleotide (NaMN) to nicotinic acid adenine dinucleotide (NaAD). The chain is Probable nicotinate-nucleotide adenylyltransferase from Chlorobium phaeobacteroides (strain BS1).